The chain runs to 631 residues: UvrABC system protein C (631 aa).

The GIY-YIG domain maps to 26 to 105 (SSPGVYQFKN…IKELKPRYNV (80 aa)). Residues 219–254 (SATIRSLNERMLSFAKELKFEQAAELKTQIDSLKRY) enclose the UVR domain.

The protein belongs to the UvrC family. Interacts with UvrB in an incision complex.

It localises to the cytoplasm. Its function is as follows. The UvrABC repair system catalyzes the recognition and processing of DNA lesions. UvrC both incises the 5' and 3' sides of the lesion. The N-terminal half is responsible for the 3' incision and the C-terminal half is responsible for the 5' incision. This chain is UvrABC system protein C, found in Chlorobium phaeobacteroides (strain DSM 266 / SMG 266 / 2430).